Consider the following 43-residue polypeptide: METATIIVIFVSSLLVGITAYSVYTAFGPASKNLRDPFEEHED.

The chain crosses the membrane as a helical span at residues 4–24; the sequence is ATIIVIFVSSLLVGITAYSVY.

This sequence belongs to the PsbN family.

The protein resides in the plastid. It is found in the chloroplast thylakoid membrane. May play a role in photosystem I and II biogenesis. The polypeptide is Protein PsbN (Thalassiosira pseudonana (Marine diatom)).